Reading from the N-terminus, the 281-residue chain is NADPH-dependent 7-cyano-7-deazaguanine reductase (281 aa).

Substrate is bound at residue 81 to 83; it reads IES. 83-84 lines the NADPH pocket; the sequence is SK. The active-site Thioimide intermediate is cysteine 188. Catalysis depends on aspartate 195, which acts as the Proton donor. 227 to 228 contributes to the substrate binding site; sequence HE. NADPH is bound at residue 256-257; it reads RG.

This sequence belongs to the GTP cyclohydrolase I family. QueF type 2 subfamily. Homodimer.

It is found in the cytoplasm. It carries out the reaction 7-aminomethyl-7-carbaguanine + 2 NADP(+) = 7-cyano-7-deazaguanine + 2 NADPH + 3 H(+). It participates in tRNA modification; tRNA-queuosine biosynthesis. In terms of biological role, catalyzes the NADPH-dependent reduction of 7-cyano-7-deazaguanine (preQ0) to 7-aminomethyl-7-deazaguanine (preQ1). The polypeptide is NADPH-dependent 7-cyano-7-deazaguanine reductase (Paracidovorax citrulli (strain AAC00-1) (Acidovorax citrulli)).